The chain runs to 266 residues: MICOS complex subunit MIC27 (266 aa).

The N-terminal 27 residues, 1–27, are a transit peptide targeting the mitochondrion; it reads MAAIRMGKLTTMPAGLIYASVSVHAAK. The Mitochondrial intermembrane segment spans residues 28 to 110; it reads EEESKKQLVK…YVYMKNPPRD (83 aa). The helical transmembrane segment at 111 to 129 threads the bilayer; sequence FLPKMGVITVSGLAGLVSA. Residues 130–137 are Mitochondrial matrix-facing; that stretch reads RKGSKFKK. The chain crosses the membrane as a helical span at residues 138–155; that stretch reads ITYPLGLATLGATVCYPV. Topologically, residues 156–266 are mitochondrial intermembrane; the sequence is QSVIIAKVTA…NVTNSGVLRI (111 aa). Serine 204 carries the post-translational modification Phosphoserine.

This sequence belongs to the apolipoprotein O/MICOS complex subunit Mic27 family. As to quaternary structure, component of the mitochondrial contact site and cristae organizing system (MICOS) complex, composed of at least MICOS10/MIC10, CHCHD3/MIC19, CHCHD6/MIC25, APOOL/MIC27, IMMT/MIC60, APOO/MIC23/MIC26 and MICOS13/MIC13. This complex was also known under the names MINOS or MitOS complex. The MICOS complex associates with mitochondrial outer membrane proteins SAMM50, MTX1 and MTX2 (together described as components of the mitochondrial outer membrane sorting assembly machinery (SAM) complex) and DNAJC11, mitochondrial inner membrane protein TMEM11 and with HSPA9. The MICOS and SAM complexes together with DNAJC11 are part of a large protein complex spanning both membranes termed the mitochondrial intermembrane space bridging (MIB) complex. Interacts with MICOS10/MIC10, IMMT/MIC60 and APOO/MIC23/MIC26.

It localises to the mitochondrion inner membrane. Its subcellular location is the mitochondrion. In terms of biological role, component of the MICOS complex, a large protein complex of the mitochondrial inner membrane that plays crucial roles in the maintenance of crista junctions, inner membrane architecture, and formation of contact sites to the outer membrane. Specifically binds to cardiolipin (in vitro) but not to the precursor lipid phosphatidylglycerol. Plays a crucial role in crista junction formation and mitochondrial function. In Pongo abelii (Sumatran orangutan), this protein is MICOS complex subunit MIC27 (APOOL).